Reading from the N-terminus, the 85-residue chain is YcgL domain-containing protein PC1_1941 (85 aa).

Residues Met-1 to Val-85 form the YcgL domain.

In Pectobacterium carotovorum subsp. carotovorum (strain PC1), this protein is YcgL domain-containing protein PC1_1941.